The sequence spans 88 residues: Early E1B 9 kDa protein (88 aa).

The disordered stretch occupies residues 23-88; the sequence is NMEGSQDEDN…DLFPELRRLP (66 aa). Residues 34–44 are compositionally biased toward low complexity; it reads RLLASAASGSS.

This chain is Early E1B 9 kDa protein, found in Homo sapiens (Human).